A 455-amino-acid polypeptide reads, in one-letter code: Ammonium transporter Rh type B (455 aa).

The Cytoplasmic segment spans residues 1 to 10 (MARIPRHRRL). A helical membrane pass occupies residues 11 to 31 (VLPLLCLLFQGATSLLFAIFV). At 32-58 (RYNHETDAALWHWGNHSNVDNEFYFRY) the chain is on the extracellular side. N-linked (GlcNAc...) asparagine glycosylation occurs at Asn-46. The chain crosses the membrane as a helical span at residues 59 to 79 (PSFQDVHVMVFVGFGFLMVFL). Topologically, residues 80–83 (QRYG) are cytoplasmic. The chain crosses the membrane as a helical span at residues 84–104 (FSSVGFTFLVATFTLQWATLL). At 105–121 (QGFLHSFHGGHIHIGVE) the chain is on the extracellular side. The chain crosses the membrane as a helical span at residues 122–142 (SLINADFCAGAVLISFGAVLG). Over 143 to 148 (KTGPAQ) the chain is Cytoplasmic. A helical membrane pass occupies residues 149 to 169 (LLLMALLEAVLFSVNEFILLS). At 170–176 (LLGVRDA) the chain is on the extracellular side. Residues 177 to 197 (GGSMTIHTFGAYFGLFLSRVL) traverse the membrane as a helical segment. Residues 198 to 216 (YRSQLEKSRHRQTSVYNSD) are Cytoplasmic-facing. The helical transmembrane segment at 217 to 237 (LFAMIGTIFLWVFWPSFNSAP) threads the bilayer. Topologically, residues 238–247 (TALGDGQHRT) are extracellular. A helical membrane pass occupies residues 248-270 (VVNTYYSLTASTLSTFALSALVS). The Cytoplasmic segment spans residues 271–274 (GDGR). Residues 275 to 295 (LDMVHIQNAALAGGVVVGTAS) form a helical membrane-spanning segment. Position 296 (Glu-296) is a topological domain, extracellular. The helical transmembrane segment at 297-317 (MMLTPFGALAAGFLAGTVSTL) threads the bilayer. Over 318–340 (GYKFFTPILESRFKLQDTCGVHN) the chain is Cytoplasmic. The helical transmembrane segment at 341–361 (LHGMPGLLGAILGVLVAALAT) threads the bilayer. Residues 362–390 (HEAYGDGLQTVFPLIAKGQRSATSQAMYQ) lie on the Extracellular side of the membrane. Residues 391 to 411 (LFGMFVTLVFASVGGSLGGLL) form a helical membrane-spanning segment. Residues 412–455 (LKLPFLDSPPDSQCFEDQVYWEVPGEQEAETQRPLRTEEPDTQA) are Cytoplasmic-facing. An interaction with ANK3 region spans residues 413–421 (KLPFLDSPP).

This sequence belongs to the ammonium transporter (TC 2.A.49) family. Rh subfamily. In terms of assembly, interacts (via C-terminus) with ANK2 and ANK3; required for targeting to the basolateral membrane. N-glycosylated. As to expression, expressed in kidney by connecting segments and collecting tubules (at protein level).

It is found in the basolateral cell membrane. The protein localises to the cytoplasmic vesicle membrane. It catalyses the reaction NH4(+)(in) = NH4(+)(out). The enzyme catalyses methylamine(out) = methylamine(in). It carries out the reaction CO2(out) = CO2(in). In terms of biological role, ammonium transporter involved in the maintenance of acid-base homeostasis. Transports ammonium and its related derivative methylammonium across the basolateral plasma membrane of epithelial cells likely contributing to renal transepithelial ammonia transport and ammonia metabolism. May transport either NH4(+) or NH3 ammonia species predominantly mediating an electrogenic NH4(+) transport. May act as a CO2 channel providing for renal acid secretion. This Rattus norvegicus (Rat) protein is Ammonium transporter Rh type B (Rhbg).